The sequence spans 319 residues: MENFPIISLDKVNGVERAATMEMIKDACENWGFFELVNHGIPREVMDTVEKMTKGHYKKCMEQRFKELVASKALEGVQAEVTDMDWESTFFLKHLPISNISEVPDLDEEYREVMRDFAKRLEKLAEELLDLLCENLGLEKGYLKNAFYGSKGPNFGTKVSNYPPCPKPDLIKGLRAHTDAGGIILLFQDDKVSGLQLLKDGQWIDVPPMRHSIVVNLGDQLEVITNGKYKSVMHRVIAQKDGARMSLASFYNPGSDAVIYPAPALVEKEAEENKQVYPKFVFDDYMKLYAGLKFQAKEPRFEAMKAMETDVKMDPIATV.

The 101-residue stretch at 153–253 folds into the Fe2OG dioxygenase domain; sequence PNFGTKVSNY…RMSLASFYNP (101 aa). Residues His177, Asp179, and His234 each contribute to the Fe cation site.

Belongs to the iron/ascorbate-dependent oxidoreductase family. Fe cation is required as a cofactor.

The enzyme catalyses 1-aminocyclopropane-1-carboxylate + L-ascorbate + O2 = ethene + L-dehydroascorbate + hydrogen cyanide + CO2 + 2 H2O. It participates in alkene biosynthesis; ethylene biosynthesis via S-adenosyl-L-methionine; ethylene from S-adenosyl-L-methionine: step 2/2. The sequence is that of 1-aminocyclopropane-1-carboxylate oxidase 1 (ACO1) from Petunia hybrida (Petunia).